Here is a 373-residue protein sequence, read N- to C-terminus: Beta sliding clamp (373 aa).

Belongs to the beta sliding clamp family. As to quaternary structure, forms a ring-shaped head-to-tail homodimer around DNA which binds and tethers DNA polymerases and other proteins to the DNA. The DNA replisome complex has a single clamp-loading complex (3 tau and 1 each of delta, delta', psi and chi subunits) which binds 3 Pol III cores (1 core on the leading strand and 2 on the lagging strand) each with a beta sliding clamp dimer. Additional proteins in the replisome are other copies of gamma, psi and chi, Ssb, DNA helicase and RNA primase.

The protein localises to the cytoplasm. Functionally, confers DNA tethering and processivity to DNA polymerases and other proteins. Acts as a clamp, forming a ring around DNA (a reaction catalyzed by the clamp-loading complex) which diffuses in an ATP-independent manner freely and bidirectionally along dsDNA. Initially characterized for its ability to contact the catalytic subunit of DNA polymerase III (Pol III), a complex, multichain enzyme responsible for most of the replicative synthesis in bacteria; Pol III exhibits 3'-5' exonuclease proofreading activity. The beta chain is required for initiation of replication as well as for processivity of DNA replication. In Mycoplasmopsis pulmonis (strain UAB CTIP) (Mycoplasma pulmonis), this protein is Beta sliding clamp (dnaN).